The primary structure comprises 528 residues: PC4 and SFRS1-interacting protein (528 aa).

Residues 7-64 (PGDLIFAKMKGYPHWPARVDEVPDGAVKPPTNKLPIFFFGTHETAFLGPKDIFPYSEN) form the PWWP domain. The disordered stretch occupies residues 61-348 (YSENKEKYGK…EKKRETSMDS (288 aa)). Residue Lys75 forms a Glycyl lysine isopeptide (Lys-Gly) (interchain with G-Cter in SUMO2) linkage. Residues 92-106 (FSSQQASTKQSNASS) are compositionally biased toward polar residues. Ser102, Ser105, and Ser106 each carry phosphoserine. Positions 113–135 (KETNVSKEDTDQEEKASNEDVTK) are enriched in basic and acidic residues. 2 positions are modified to phosphothreonine: Thr115 and Thr122. Ser129 is subject to Phosphoserine. The residue at position 141 (Thr141) is a Phosphothreonine. Residues 144–153 (AARRGRKRKA) show a composition bias toward basic residues. The short motif at 146–156 (RRGRKRKAEKQ) is the Nuclear localization signal element. Phosphoserine is present on residues Ser176 and Ser205. Basic and acidic residues predominate over residues 212–260 (DEDKSKKKGPEEKQPKKQLKKEEEGQKEEEKPRKEPDKKEGKKEVESKR). Phosphoserine is present on Ser270. At Thr271 the chain carries Phosphothreonine. Residues Ser272 and Ser274 each carry the phosphoserine modification. Positions 285–300 (KRKGGRNFQAAHRRNM) are enriched in basic residues. Over residues 303-348 (GQHEKEAGDRKRKQEEQMETEQQNKDEGKKPEVKKVEKKRETSMDS) the composition is skewed to basic and acidic residues. Coiled coils occupy residues 306–332 (EKEA…EGKK) and 369–393 (NRCI…KHTE). Residues 338-415 (VEKKRETSMD…VSQVIMEKST (78 aa)) form an integrase-binding domain (IBD) region. Ser432 carries the phosphoserine modification. Thr435 bears the Phosphothreonine mark. Ser441 bears the Phosphoserine mark. The segment covering 444-471 (EQRQHEEANKTKDQGKKGPNKKLEKEPT) has biased composition (basic and acidic residues). A disordered region spans residues 444-528 (EQRQHEEANK…ISLKESTLDN (85 aa)). The span at 472–492 (GTKSLNGGSDAQESNHPQHNG) shows a compositional bias: polar residues. Residues 496-528 (EDGKDSREASSKTKPPGEEREAEISLKESTLDN) are compositionally biased toward basic and acidic residues. Arg515 bears the Citrulline mark. Ser520 bears the Phosphoserine mark. Thr525 is subject to Phosphothreonine.

It belongs to the HDGF family. As to quaternary structure, monomer. Interacts with IFRD1/PC4. Interacts (via IBD domain) with POGZ (via IBM motif) and CDCA7L (via IBM motifs). Interacts (via IBD domain) with KMT2A (via IBM motifs) with a moderate affinity whereas interacts with the KMT2A-MEN1 complex with a greater affinity; MEN1 enhances interaction of KMT2A with PSIP1. Interacts (via IBD domain) with IWS1 (via IBM motif), MED1 (via IBM motif) and DBF4 (via IBM motifs). Post-translationally, citrullinated by PADI4.

The protein localises to the nucleus. Its function is as follows. Transcriptional coactivator involved in neuroepithelial stem cell differentiation and neurogenesis. Involved in particular in lens epithelial cell gene regulation and stress responses. May play an important role in lens epithelial to fiber cell terminal differentiation. May play a protective role during stress-induced apoptosis. The protein is PC4 and SFRS1-interacting protein (Psip1) of Mus musculus (Mouse).